Here is a 274-residue protein sequence, read N- to C-terminus: Proteasome subunit beta (274 aa).

Residues 1–52 (MADPMGGAGRLPAVFMTPGTSSFTDFLSQSAPHLLPGARGGLPGPVTEVAHG) constitute a propeptide, removed in mature form; by autocatalysis. The Nucleophile role is filled by T53.

This sequence belongs to the peptidase T1B family. The 20S proteasome core is composed of 14 alpha and 14 beta subunits that assemble into four stacked heptameric rings, resulting in a barrel-shaped structure. The two inner rings, each composed of seven catalytic beta subunits, are sandwiched by two outer rings, each composed of seven alpha subunits. The catalytic chamber with the active sites is on the inside of the barrel. Has a gated structure, the ends of the cylinder being occluded by the N-termini of the alpha-subunits. Is capped by the proteasome-associated ATPase, ARC.

It is found in the cytoplasm. It carries out the reaction Cleavage of peptide bonds with very broad specificity.. It functions in the pathway protein degradation; proteasomal Pup-dependent pathway. The formation of the proteasomal ATPase ARC-20S proteasome complex, likely via the docking of the C-termini of ARC into the intersubunit pockets in the alpha-rings, may trigger opening of the gate for substrate entry. Interconversion between the open-gate and close-gate conformations leads to a dynamic regulation of the 20S proteasome proteolysis activity. Component of the proteasome core, a large protease complex with broad specificity involved in protein degradation. In Frankia alni (strain DSM 45986 / CECT 9034 / ACN14a), this protein is Proteasome subunit beta.